Consider the following 426-residue polypeptide: Trophoblast glycoprotein (426 aa).

Residues 1-31 (MPGAGSRGPSAGDGRLRLARLALVLLGWVSA) form the signal peptide. Over 32–361 (SAPSSSVPSS…AVLPQSLQTS (330 aa)) the chain is Extracellular. The span at 33–47 (APSSSVPSSSTSPAA) shows a compositional bias: low complexity. A disordered region spans residues 33–53 (APSSSVPSSSTSPAAFLASGS). The LRRNT domain occupies 53 to 91 (SAQPPPAERCPAACECSEAARTVKCVNRNLLEVPADLPP). 2 disulfide bridges follow: Cys-62–Cys-68 and Cys-66–Cys-77. LRR repeat units follow at residues 92-113 (YVRNLFLTGNQMTVLPAGAFAR), 116-139 (PLADLEALNLSGNHLKEVCAGAFE), 141-163 (LPGLRRLDLSHNPLTNLSAFAFA), 172-210 (PSPLEELILNHIVPPEDQRQNGSFEGMVAFEGMVAAALR), 215-238 (LRGLTRLELASNHFLFLPRDLLAQ), 239-261 (LPSLRYLDLRNNSLVSLTYASFR), and 262-281 (NLTHLESLHLEDNALKVLHN). An N-linked (GlcNAc...) asparagine glycan is attached at Asn-124. An N-linked (GlcNAc...) asparagine glycan is attached at Asn-281. The LRRCT domain maps to 289-352 (GLAHVKVFLD…LNSSDLDCDA (64 aa)). 2 disulfide bridges follow: Cys-304–Cys-329 and Cys-306–Cys-350. A helical transmembrane segment spans residues 362–382 (YVFLGIVLALIGAIFLLVLYL). Over 383 to 426 (NRKGIKKWMHNIRDACRDHMEGYHYRYEINADPRLTNLSSNSDV) the chain is Cytoplasmic. Residue Ser-424 is modified to Phosphoserine.

Post-translationally, highly glycosylated. As to expression, highly expressed in embryo and placenta. In adult, expressed only in brain and ovary. Not detected in kidney small intestine, heart, spleen, testis, liver, lung, thymus and stomach.

Its subcellular location is the cell membrane. Its function is as follows. May function as an inhibitor of Wnt/beta-catenin signaling by indirectly interacting with LRP6 and blocking Wnt3a-dependent LRP6 internalization. The sequence is that of Trophoblast glycoprotein (Tpbg) from Mus musculus (Mouse).